We begin with the raw amino-acid sequence, 343 residues long: Cell division protein ZipA (343 aa).

The Periplasmic segment spans residues 1–4 (MDLN). The helical transmembrane segment at 5–25 (TILIILGILALIGLVAHGIWS) threads the bilayer. Topologically, residues 26–343 (NRREKSQYFD…MAEAAYLARV (318 aa)) are cytoplasmic. The disordered stretch occupies residues 39–98 (AFHRNPQSTGRPSAQASQPMTPNFAQPAKETEQIRQTYQEPQVRQMSSSPEQQTRPTAQA). 2 stretches are compositionally biased toward polar residues: residues 43–62 (NPQS…TPNF) and 72–95 (IRQT…TRPT).

The protein belongs to the ZipA family. Interacts with FtsZ via their C-terminal domains.

It localises to the cell inner membrane. Functionally, essential cell division protein that stabilizes the FtsZ protofilaments by cross-linking them and that serves as a cytoplasmic membrane anchor for the Z ring. Also required for the recruitment to the septal ring of downstream cell division proteins. This Actinobacillus succinogenes (strain ATCC 55618 / DSM 22257 / CCUG 43843 / 130Z) protein is Cell division protein ZipA.